We begin with the raw amino-acid sequence, 629 residues long: Phosphoglucomutase, chloroplastic (629 aa).

The transit peptide at 1 to 69 directs the protein to the chloroplast; it reads MSSTYARFDT…SSSSGPIIAG (69 aa). Alpha-D-glucose 1,6-bisphosphate-binding residues include Arg-94 and Ser-187. The Phosphoserine intermediate role is filled by Ser-187. Mg(2+) contacts are provided by Ser-187, Asp-352, Asp-354, and Asp-356. Ser-187 carries the post-translational modification Phosphoserine. Alpha-D-glucose 1,6-bisphosphate-binding residues include Asp-356, Arg-357, Thr-420, Glu-439, Ser-441, and Lys-452.

The protein belongs to the phosphohexose mutase family. Monomer. Requires Mg(2+) as cofactor.

The protein localises to the plastid. Its subcellular location is the chloroplast. The catalysed reaction is alpha-D-glucose 1-phosphate = alpha-D-glucose 6-phosphate. It carries out the reaction O-phospho-L-seryl-[protein] + alpha-D-glucose 1-phosphate = alpha-D-glucose 1,6-bisphosphate + L-seryl-[protein]. The enzyme catalyses alpha-D-glucose 1,6-bisphosphate + L-seryl-[protein] = O-phospho-L-seryl-[protein] + alpha-D-glucose 6-phosphate. Its activity is regulated as follows. Inhibited by the Calvin cycle intermediates fructose-1,6-bisphosphate and ribulose-1,5-bisphosphate. Catalyzes the reversible isomerization of alpha-D-glucose 1-phosphate to alpha-D-glucose 6-phosphate. The mechanism proceeds via the intermediate compound alpha-D-glucose 1,6-bisphosphate. This enzyme participates in both the breakdown and synthesis of glucose. The protein is Phosphoglucomutase, chloroplastic (PGMP) of Brassica napus (Rape).